A 33-amino-acid polypeptide reads, in one-letter code: Helofensin-1 (33 aa).

The protein belongs to the beta-defensin family. Helofensin subfamily. As to expression, expressed by the venom gland.

Its subcellular location is the secreted. Functionally, lethal toxin which possesses an inhibitory effect on direct electrical stimulation of the isolated hemi-diaphragm. Neither hemorrhagic nor hemolytic activities are detected. Phospholipase A2 activity, proteolytic activity and arginine esterolytic activity are absent. The sequence is that of Helofensin-1 from Heloderma horridum horridum (Mexican beaded lizard).